A 245-amino-acid chain; its full sequence is tRNA (guanine-N(1)-)-methyltransferase (245 aa).

Residues glycine 111 and 131-136 each bind S-adenosyl-L-methionine; that span reads MGDYVL.

This sequence belongs to the RNA methyltransferase TrmD family. As to quaternary structure, homodimer.

The protein resides in the cytoplasm. The enzyme catalyses guanosine(37) in tRNA + S-adenosyl-L-methionine = N(1)-methylguanosine(37) in tRNA + S-adenosyl-L-homocysteine + H(+). Its function is as follows. Specifically methylates guanosine-37 in various tRNAs. In Staphylococcus aureus (strain USA300), this protein is tRNA (guanine-N(1)-)-methyltransferase.